We begin with the raw amino-acid sequence, 228 residues long: MGITGMTYMFTMVLSLIVLIFSASTVGFDYFQFTQQYQPAVCNSNPTPCNDPTDKLFTVHGLWPSNRNGPDPEKCKTTTMNSQKIGNMTAQLEIIWPNVLNRSDHVGFWEREWLKHGTCGYPTIKDDMHYLKTVIKMYITQKQNVSAILSKATIQPNGNNRSLVDIENAIRSGNNNTKPKFKCQKNTRTTTELVEVTLCSNRDLTKFINCPHGPPKGSRYFCPANVKY.

An N-terminal signal peptide occupies residues 1 to 27 (MGITGMTYMFTMVLSLIVLIFSASTVG). Q36 contacts RNA. Cysteines 42 and 49 form a disulfide. H60 is an RNA binding site. H60 serves as the catalytic Proton donor. A disulfide bridge connects residues C75 and C119. N-linked (GlcNAc) asparagine glycosylation is present at N87. 98 to 99 (NV) provides a ligand contact to RNA. N-linked (GlcNAc...) asparagine glycosylation occurs at N101. RNA-binding positions include F108, 111–112 (RE), and 115–116 (KH). The active site involves E112. H116 acts as the Proton acceptor in catalysis. N-linked (GlcNAc...) asparagine glycans are attached at residues N144, N160, and N175. 2 disulfide bridges follow: C183/C222 and C199/C210.

Belongs to the RNase T2 family. In terms of processing, the N-glycans attached at Asn-101, Asn-160 and Asn-175 consist predominantly of disaccharide (GlcNAc-GlcNAc). The N-glycan at 87 is 53% monosaccharide and 47% disaccharide. The N-glycan at Asn-144 contains mannose and xylose.

The protein resides in the secreted. The protein localises to the extracellular space. The enzyme catalyses a ribonucleotidyl-ribonucleotide-RNA + H2O = a 3'-end 3'-phospho-ribonucleotide-RNA + a 5'-end dephospho-ribonucleoside-RNA + H(+). Functionally, self-incompatibility (SI) is the inherited ability of a flowering plant to prevent self-fertilization by discriminating between self and non-self pollen during pollination. In many species, self-incompatibility is controlled by the single, multiallelic locus S. The polypeptide is Ribonuclease S-4 (Pyrus pyrifolia (Chinese pear)).